The sequence spans 511 residues: Lariat debranching enzyme (511 aa).

C52, H54, D83, and N128 together coordinate a divalent metal cation. A lariat recognition loop region spans residues 168-198 (SGIYSHGDVEFSHYERPAFAERDVKSAYHVR). Residues H226, H278, and H280 each coordinate a divalent metal cation. A disordered region spans residues 473–511 (EDDFIIDRGHGSEEPEAKKSRLEEEKKKKKKKIENLKTL). Residues 477-498 (IIDRGHGSEEPEAKKSRLEEEK) are compositionally biased toward basic and acidic residues.

Belongs to the lariat debranching enzyme family. Fe(2+) serves as cofactor. It depends on Zn(2+) as a cofactor. Mn(2+) is required as a cofactor.

The protein resides in the nucleus. Its activity is regulated as follows. Active in presence of diverse metals including Fe(2+), Zn(2+), Mn(2+). Binds two metal cations in two adjacent alpha and beta metal-binding pockets. Cleaves the 2'-5' phosphodiester linkage at the branch point of lariat intron pre-mRNAs after splicing and converts them into linear molecules that are subsequently degraded. It thereby facilitates ribonucleotide turnover. This Caenorhabditis briggsae protein is Lariat debranching enzyme (dbr-1).